Here is a 113-residue protein sequence, read N- to C-terminus: U11-theraphotoxin-Hhn1a (113 aa).

Positions 1–21 (MNTVRVTFLLVFVLAVSLGQA) are cleaved as a signal peptide. Residues 22–74 (DKDENRMEMQEKAEQGKSYLDFAENLLLQKLEELEAKLLEEDSEESRNSRQKR) constitute a propeptide that is removed on maturation. Intrachain disulfides connect Cys75/Cys90, Cys82/Cys95, and Cys89/Cys110.

Belongs to the neurotoxin 14 (magi-1) family. 01 (HNTX-16) subfamily. Expressed by the venom gland.

It localises to the secreted. Probable ion channel inhibitor. In Cyriopagopus hainanus (Chinese bird spider), this protein is U11-theraphotoxin-Hhn1a.